The sequence spans 423 residues: Aspartic protease-like protein pytH (423 aa).

The N-terminal stretch at 1–16 (MWLSVALLTLLDGALA) is a signal peptide. A Peptidase A1 domain is found at 38 to 416 (TTDAIQIGTP…DFDKLRVGLA (379 aa)). The active site involves aspartate 56. N-linked (GlcNAc...) asparagine glycosylation is found at asparagine 88, asparagine 97, asparagine 168, asparagine 196, asparagine 231, and asparagine 279. The active site involves aspartate 291. An N-linked (GlcNAc...) asparagine glycan is attached at asparagine 330. Cysteine 338 and cysteine 377 form a disulfide bridge.

It belongs to the peptidase A1 family.

The protein operates within secondary metabolite biosynthesis. Functionally, aspartic protease-like protein; part of the gene cluster that mediates the biosynthesis of pyranterreones, a family of antioxidative compounds. The first step of pyranonigrins biosynthesis is performed by the hybrid PKS-NRPS synthetase pytA that condenses 4 malonyl-CoA units ato the acetyl starter unit by the modular PKS of pytA. The acyl chain is then connected to an L-serine through the amide bond by the modular NRPS of pytA. A tetramic acid is formed and released from the PKS-NRPS pytA to give pyranterreone 5 with the help of the thioesterase pytI. Pyranterreone 5 could be methylated by pytC to afford pyranterreone 6. Both pyranterreones 5 and 6 are subsequently oxidized by the FAD-linked oxidoreductase pytB and the cytochrome P450 monooxygenase pytD to form the fused gamma-pyrone core, resulting in pyranterreones 7 and 11, respectively. The hydroxy group at C-8 of pyranterreones 7 and 11 are dehydrated by the aspartyl protease pytH to form a delta-7 double bond to give pyranterreones 3 and 1, 2 accordingly. The exo-methylene of pyranterreone 3 could be reduced into a pendant methyl by reductase pytE to provide pyranterreone 4, also known as cordylactam. Pyranterreone 4 can be reconverted to pyranterreone 3 through pytB-catalyzed dehydrogenation or further oxidized to pyranterreones 9 and 10. The sequence is that of Aspartic protease-like protein pytH from Aspergillus terreus (strain NIH 2624 / FGSC A1156).